Here is a 435-residue protein sequence, read N- to C-terminus: Protoheme IX farnesyltransferase, mitochondrial (435 aa).

The transit peptide at 1-35 (MPALCATYLIHSGNLRACLRIVPLTKPSVVIAYRH) directs the protein to the mitochondrion. 6 helical membrane-spanning segments follow: residues 135 to 155 (VLVM…ATVL), 157 to 177 (LLSL…INMG), 212 to 232 (GVIG…LLGA), 250 to 270 (IINT…GWAA), 324 to 344 (VALR…YYGI), and 401 to 421 (FWVS…HKKG).

The protein belongs to the UbiA prenyltransferase family.

The protein localises to the mitochondrion membrane. Its function is as follows. Converts protoheme IX and farnesyl diphosphate to heme O. This is Protoheme IX farnesyltransferase, mitochondrial (COX10) from Eremothecium gossypii (strain ATCC 10895 / CBS 109.51 / FGSC 9923 / NRRL Y-1056) (Yeast).